The primary structure comprises 130 residues: Histone H2A.6 (130 aa).

Over residues 1 to 12 (MAGRGKTLGSGG) the composition is skewed to gly residues. The segment at 1-23 (MAGRGKTLGSGGAKKATSRSSKA) is disordered.

This sequence belongs to the histone H2A family. As to quaternary structure, the nucleosome is a histone octamer containing two molecules each of H2A, H2B, H3 and H4 assembled in one H3-H4 heterotetramer and two H2A-H2B heterodimers. The octamer wraps approximately 147 bp of DNA. Interacts with VIP1. Not ubiquitinated. In terms of tissue distribution, low level of expression, mainly in dividing tissues: floral buds, margins of newly emerging leaves, expanding leaves and the meristematic zone of root tips. Also expressed in many non-dividing cells of the elongation zone of the root.

It localises to the nucleus. Its subcellular location is the chromosome. Functionally, core component of nucleosome. Nucleosomes wrap and compact DNA into chromatin, limiting DNA accessibility to the cellular machineries which require DNA as a template. Histones thereby play a central role in transcription regulation, DNA repair, DNA replication and chromosomal stability. DNA accessibility is regulated via a complex set of post-translational modifications of histones, also called histone code, and nucleosome remodeling. Required for the T-DNA integration step of plant transformation by Agrobacterium. May play an important role in illegitimate recombination. In Arabidopsis thaliana (Mouse-ear cress), this protein is Histone H2A.6 (RAT5).